The sequence spans 451 residues: Penicillin-binding protein 4* (451 aa).

Serine 61 functions as the Acyl-ester intermediate in the catalytic mechanism.

This sequence belongs to the beta-lactamase family.

Its subcellular location is the forespore outer membrane. Its pathway is cell wall biogenesis; peptidoglycan biosynthesis. Its function is as follows. Probably involved in peptidoglycan modification during cortex synthesis. In Bacillus subtilis (strain 168), this protein is Penicillin-binding protein 4* (pbpE).